We begin with the raw amino-acid sequence, 182 residues long: UPF0316 protein BCB4264_A3368 (182 aa).

3 helical membrane-spanning segments follow: residues 6–26 (LIFV…ILLV), 32–52 (SAAG…GIVF), and 58–78 (WMNI…GGYI).

Belongs to the UPF0316 family.

The protein resides in the cell membrane. The chain is UPF0316 protein BCB4264_A3368 from Bacillus cereus (strain B4264).